The sequence spans 182 residues: Probable RNA 2'-phosphotransferase (182 aa).

This sequence belongs to the KptA/TPT1 family.

Functionally, removes the 2'-phosphate from RNA via an intermediate in which the phosphate is ADP-ribosylated by NAD followed by a presumed transesterification to release the RNA and generate ADP-ribose 1''-2''-cyclic phosphate (APPR&gt;P). May function as an ADP-ribosylase. In Flavobacterium johnsoniae (strain ATCC 17061 / DSM 2064 / JCM 8514 / BCRC 14874 / CCUG 350202 / NBRC 14942 / NCIMB 11054 / UW101) (Cytophaga johnsonae), this protein is Probable RNA 2'-phosphotransferase.